Consider the following 301-residue polypeptide: Glycine--tRNA ligase alpha subunit (301 aa).

The protein belongs to the class-II aminoacyl-tRNA synthetase family. As to quaternary structure, tetramer of two alpha and two beta subunits.

The protein resides in the cytoplasm. The enzyme catalyses tRNA(Gly) + glycine + ATP = glycyl-tRNA(Gly) + AMP + diphosphate. In Neisseria meningitidis serogroup C (strain 053442), this protein is Glycine--tRNA ligase alpha subunit.